The sequence spans 172 residues: Transcriptional repressor NrdR (172 aa).

Residues 3-34 (CPYCRNTDTRVLDSRVADDGGSIRRRRTCSAC) fold into a zinc finger. The region spanning 46 to 136 (LTVLKRSGAS…VYRAFESADD (91 aa)) is the ATP-cone domain.

This sequence belongs to the NrdR family. It depends on Zn(2+) as a cofactor.

In terms of biological role, negatively regulates transcription of bacterial ribonucleotide reductase nrd genes and operons by binding to NrdR-boxes. The polypeptide is Transcriptional repressor NrdR (Nocardioides sp. (strain ATCC BAA-499 / JS614)).